A 366-amino-acid polypeptide reads, in one-letter code: Cytochrome c peroxidase, mitochondrial (366 aa).

Residues 1–46 (MASAARSASRAFLRSTPTTSSFRPAVRAARFALPAQGFRAAGRRGY) constitute a mitochondrion transit peptide. The Proton acceptor role is filled by histidine 127. Residue histidine 250 coordinates heme b. Residue tryptophan 266 is the Tryptophan radical intermediate of the active site.

The protein belongs to the peroxidase family. Cytochrome c peroxidase subfamily. As to quaternary structure, forms a one-to-one complex with cytochrome c. Heme b serves as cofactor.

It is found in the mitochondrion matrix. The protein resides in the mitochondrion intermembrane space. The enzyme catalyses 2 Fe(II)-[cytochrome c] + H2O2 + 2 H(+) = 2 Fe(III)-[cytochrome c] + 2 H2O. Its function is as follows. Destroys radicals which are normally produced within the cells and which are toxic to biological systems. This chain is Cytochrome c peroxidase, mitochondrial (ccp1), found in Aspergillus fumigatus (strain ATCC MYA-4609 / CBS 101355 / FGSC A1100 / Af293) (Neosartorya fumigata).